A 114-amino-acid chain; its full sequence is uncharacterized protein (114 aa).

To E.coli YfiI and P.aeruginosa RluD.

This is an uncharacterized protein from Escherichia coli O6:H1 (strain CFT073 / ATCC 700928 / UPEC).